A 436-amino-acid polypeptide reads, in one-letter code: 3-ketoacyl-CoA thiolase (436 aa).

The active-site Acyl-thioester intermediate is cysteine 99. Active-site proton acceptor residues include histidine 392 and cysteine 422.

This sequence belongs to the thiolase-like superfamily. Thiolase family. Heterotetramer of two alpha chains (FadJ) and two beta chains (FadI).

Its subcellular location is the cytoplasm. The catalysed reaction is an acyl-CoA + acetyl-CoA = a 3-oxoacyl-CoA + CoA. It functions in the pathway lipid metabolism; fatty acid beta-oxidation. Its function is as follows. Catalyzes the final step of fatty acid oxidation in which acetyl-CoA is released and the CoA ester of a fatty acid two carbons shorter is formed. In Salmonella paratyphi A (strain AKU_12601), this protein is 3-ketoacyl-CoA thiolase.